The sequence spans 1304 residues: Zinc finger CCCH domain-containing protein 4 (1304 aa).

Positions 1-33 (MEAVPGTPPPPPSESPPPPSPPPPSTPSPPPCS) are enriched in pro residues. The segment at 1–387 (MEAVPGTPPP…SDHDKPHQQS (387 aa)) is disordered. Residues 53–73 (DREDGELEEGELEDDGAEEVQ) show a composition bias toward acidic residues. Over residues 80-99 (ERSRKEKGEKHHSDSEEEKS) the composition is skewed to basic and acidic residues. 2 positions are modified to phosphoserine: serine 92 and serine 94. Positions 94–128 (SEEEKSHRRLKRKRKKEREKEKRRSKKRRKSKHKR) form a coiled coil. Residues 100-130 (HRRLKRKRKKEREKEKRRSKKRRKSKHKRHA) are compositionally biased toward basic residues. Positions 135–144 (DFSDFSDDSD) are enriched in acidic residues. A Phosphotyrosine modification is found at tyrosine 155. The span at 165 to 174 (SHQQYSSSHN) shows a compositional bias: polar residues. Residues 194-218 (EDYENEQYGEYEGDEEEDMGKEDYD) show a composition bias toward acidic residues. Residues 219-235 (DFTKELNQYRRAKEGSS) show a composition bias toward basic and acidic residues. Positions 238–251 (RGSRGRGRGYRGRG) are enriched in basic residues. The segment covering 252-264 (SRGGSRGRGMGRG) has biased composition (gly residues). The segment covering 277–303 (PEDEEDLYEEEIEYGESEEPMGDDDYD) has biased composition (acidic residues). The segment covering 304-320 (DYSKELNQYRRSKDSRG) has biased composition (basic and acidic residues). Positions 322–346 (GLSRGRGRGSRGGRGKGMGRGRGRG) are enriched in basic residues. Over residues 357-368 (NDDEDFYDDDMG) the composition is skewed to acidic residues. A compositionally biased stretch (basic and acidic residues) spans 376–387 (RRSDHDKPHQQS). 3 C3H1-type zinc fingers span residues 389 to 416 (KKGK…HDIE), 418 to 445 (PKKR…HGDF), and 446 to 469 (PCKL…HDPL). Residues 485 to 495 (AEAGAEDEKEV) show a composition bias toward acidic residues. Positions 485 to 567 (AEAGAEDEKE…LPTHEPLSPQ (83 aa)) are disordered. Composition is skewed to pro residues over residues 506 to 529 (LPKP…PAPT) and 538 to 556 (GGPP…PPQM). Asymmetric dimethylarginine is present on arginine 599. 3 disordered regions span residues 601–691 (PGPG…DSPH), 719–970 (PGLV…SHIK), and 994–1304 (LPIP…PFCQ). Pro residues predominate over residues 603-622 (PGGPSGPMGPGPNMGPPGPM). Over residues 628–660 (PDMHPDMHPDMHPDMHPDMHPDMHPDMHPDMHP) the composition is skewed to basic and acidic residues. The segment covering 669 to 683 (NPGPPMGPGGPPMMP) has biased composition (pro residues). The stretch at 778–809 (ALYLRIQQKQQEEERARRLAESSKQDRENEEG) forms a coiled coil. Over residues 787 to 804 (QQEEERARRLAESSKQDR) the composition is skewed to basic and acidic residues. A phosphoserine mark is found at serine 816 and serine 817. Over residues 824–852 (SSVTSILKTLRQQTSSRPQASVGEPSSSG) the composition is skewed to polar residues. A compositionally biased stretch (basic and acidic residues) spans 869–884 (SDPRLSRDPRLSRHAE). Serine 913, serine 916, and serine 917 each carry phosphoserine. Positions 913 to 929 (SLHSSPAGPSSSKGQPP) are enriched in low complexity. Residues 994 to 1005 (LPIPKQDVPPVP) are compositionally biased toward pro residues. Polar residues-rich tracts occupy residues 1028-1044 (NTRQ…SGSN) and 1058-1067 (VNVNTPGQSE). Residues 1068-1085 (KPSDPRVRKTPTDPRLQK) show a composition bias toward basic and acidic residues. Low complexity-rich tracts occupy residues 1098-1129 (PCPT…VLAA) and 1137-1146 (SSGQSSVLSG). A phosphoserine mark is found at serine 1104, serine 1109, serine 1111, and serine 1115. At threonine 1119 the chain carries Phosphothreonine. Residues 1204–1220 (KASTDGATATDRYNSYN) are compositionally biased toward polar residues. The segment covering 1225–1235 (KATAAPTAASS) has biased composition (low complexity). Phosphoserine is present on residues serine 1270 and serine 1276.

Belongs to the suppressor of sable family. In terms of assembly, interacts with WDR82.

The protein resides in the chromosome. Functionally, RNA-binding protein that suppresses transcription of long non-coding RNAs (lncRNAs). LncRNAs are defined as transcripts more than 200 nucleotides that are not translated into protein. Together with WDR82, part of a transcription termination checkpoint that promotes transcription termination of lncRNAs and their subsequent degradation by the exosome. The transcription termination checkpoint is activated by the inefficiently spliced first exon of lncRNAs. The polypeptide is Zinc finger CCCH domain-containing protein 4 (Mus musculus (Mouse)).